A 471-amino-acid chain; its full sequence is MTDLPDSTRWQLWIVAFGFFMQSLDTTIVNTALPSMAQSLGESPLHMHMVIVSYVLTVAVMLPASGWLADKVGVRNIFFTAIVLFTLGSLFCALSGTLNELLLARALQGVGGAMMVPVGRLTVMKIVPREQYMAAMTFVTLPGQIGPLLGPALGGLLVEYASWHWIFLINIPVGIIGAIATLMLMPNYTMQTRRFDLSGFLLLAVGMAVLTLALDGSKGTGFSPLAIAGLVAVGVVALVLYLLHAQNNNRALFSLKLFRTRTFSLGLAGSFAGRIGSGMLPFMTPVFLQIGLGFSPFHAGLMMIPMVLGSMGMKRIVVQVVNRFGYRWVLVATTLGLSLVTLLFMTTALLGWYYVLPFVLFLQGMVNSTRFSSMNTLTLKDLPDNLASSGNSLLSMIMQLSMSIGVTIAGLLLGLFGSQHVSVDSGTTQTVFMYTWLSMAFIIALPAFVFARVPSDTHQNVAISRRKRSAQ.

Over 1-11 (MTDLPDSTRWQ) the chain is Periplasmic. Residues 12–32 (LWIVAFGFFMQSLDTTIVNTA) traverse the membrane as a helical segment. At 33–48 (LPSMAQSLGESPLHMH) the chain is on the cytoplasmic side. The helical transmembrane segment at 49–69 (MVIVSYVLTVAVMLPASGWLA) threads the bilayer. Residues 70-76 (DKVGVRN) lie on the Periplasmic side of the membrane. The chain crosses the membrane as a helical span at residues 77 to 97 (IFFTAIVLFTLGSLFCALSGT). Residues 98–101 (LNEL) lie on the Cytoplasmic side of the membrane. The helical transmembrane segment at 102-124 (LLARALQGVGGAMMVPVGRLTVM) threads the bilayer. At 125–137 (KIVPREQYMAAMT) the chain is on the periplasmic side. Residues 138-158 (FVTLPGQIGPLLGPALGGLLV) traverse the membrane as a helical segment. Residues 159–164 (EYASWH) are Cytoplasmic-facing. Residues 165–185 (WIFLINIPVGIIGAIATLMLM) traverse the membrane as a helical segment. Topologically, residues 186–196 (PNYTMQTRRFD) are periplasmic. Residues 197 to 217 (LSGFLLLAVGMAVLTLALDGS) form a helical membrane-spanning segment. At 218–224 (KGTGFSP) the chain is on the cytoplasmic side. A helical transmembrane segment spans residues 225–245 (LAIAGLVAVGVVALVLYLLHA). The Periplasmic segment spans residues 246 to 262 (QNNNRALFSLKLFRTRT). A helical transmembrane segment spans residues 263–283 (FSLGLAGSFAGRIGSGMLPFM). At 284 to 285 (TP) the chain is on the cytoplasmic side. The helical transmembrane segment at 286 to 306 (VFLQIGLGFSPFHAGLMMIPM) threads the bilayer. At 307-341 (VLGSMGMKRIVVQVVNRFGYRWVLVATTLGLSLVT) the chain is on the periplasmic side. The helical transmembrane segment at 342–362 (LLFMTTALLGWYYVLPFVLFL) threads the bilayer. Topologically, residues 363–395 (QGMVNSTRFSSMNTLTLKDLPDNLASSGNSLLS) are cytoplasmic. The chain crosses the membrane as a helical span at residues 396 to 416 (MIMQLSMSIGVTIAGLLLGLF). Topologically, residues 417–430 (GSQHVSVDSGTTQT) are periplasmic. The chain crosses the membrane as a helical span at residues 431–451 (VFMYTWLSMAFIIALPAFVFA). The Cytoplasmic portion of the chain corresponds to 452–471 (RVPSDTHQNVAISRRKRSAQ).

This sequence belongs to the major facilitator superfamily. TCR/Tet family.

It localises to the cell inner membrane. This Escherichia coli O81 (strain ED1a) protein is Putative multidrug resistance protein MdtD.